The primary structure comprises 483 residues: MKVSKEKWEKNFSEWLDWVLREAEIYDYGRYPVKGMGVWMPYGFKIRQNVLQLIRKLLDETGHEEVLFPLLIPEDLLKKESEHIRGFEEEVYWVTKGGSQDLDVKLALRPTSETSITFMESFWVKSYKQLPKKYYQIVSVFRYETKATRPMMRLREITTFKEAHTLHETYEDAARQVDEAINIYKAFFDELGIPYMISKRPEWDKFAGAEYTIAFDTILPDSRVLQIGTVHHLGQHFTKAFDFKIQRKDGSLDYPHQTSYGISDRVIAVLIAINGDDHGPVLNPVIAPIKVVIVPIPAKDEETTAKIINYAKEVGENLKNRGITVVIDDDKEKTPGEKFYIWELKGVPLRIEIGPKELNNNTVYIKRRDTFEGKSVPKDKAVEEVNTLLEKIKNDLHEKALKFLKERIIYTEDLNEAKKILEERAGVVEVPWCGDNNCGLQLQDVTNARVLGIPLDEDKDVSNAKCVMCKKPAKSLLRLAKTY.

Belongs to the class-II aminoacyl-tRNA synthetase family. ProS type 3 subfamily. In terms of assembly, homodimer.

The protein localises to the cytoplasm. It catalyses the reaction tRNA(Pro) + L-proline + ATP = L-prolyl-tRNA(Pro) + AMP + diphosphate. Functionally, catalyzes the attachment of proline to tRNA(Pro) in a two-step reaction: proline is first activated by ATP to form Pro-AMP and then transferred to the acceptor end of tRNA(Pro). The protein is Proline--tRNA ligase of Sulfurisphaera tokodaii (strain DSM 16993 / JCM 10545 / NBRC 100140 / 7) (Sulfolobus tokodaii).